The sequence spans 230 residues: uncharacterized protein (230 aa).

It belongs to the transferase hexapeptide repeat family.

This is an uncharacterized protein from Escherichia coli (strain K12).